The sequence spans 230 residues: uncharacterized protein (230 aa).

This sequence belongs to the transferase hexapeptide repeat family.

This is an uncharacterized protein from Escherichia coli O6:K15:H31 (strain 536 / UPEC).